Consider the following 386-residue polypeptide: 8-amino-7-oxononanoate synthase (386 aa).

Positions 22 and 29 each coordinate substrate. 109–110 is a pyridoxal 5'-phosphate binding site; it reads GY. Substrate is bound at residue His134. Pyridoxal 5'-phosphate-binding positions include Ser182, 207–210, and 237–240; these read DDAH and TLSK. Lys240 is subject to N6-(pyridoxal phosphate)lysine. Thr349 is a binding site for substrate.

It belongs to the class-II pyridoxal-phosphate-dependent aminotransferase family. BioF subfamily. Homodimer. Pyridoxal 5'-phosphate is required as a cofactor.

The catalysed reaction is 6-carboxyhexanoyl-[ACP] + L-alanine + H(+) = (8S)-8-amino-7-oxononanoate + holo-[ACP] + CO2. The protein operates within cofactor biosynthesis; biotin biosynthesis. Catalyzes the decarboxylative condensation of pimeloyl-[acyl-carrier protein] and L-alanine to produce 8-amino-7-oxononanoate (AON), [acyl-carrier protein], and carbon dioxide. This is 8-amino-7-oxononanoate synthase from Beijerinckia indica subsp. indica (strain ATCC 9039 / DSM 1715 / NCIMB 8712).